Consider the following 283-residue polypeptide: Methylamine utilization protein MauF (283 aa).

Helical transmembrane passes span 37–57 (FALM…LHSA), 58–78 (MSAT…GGFL), 116–136 (GYAI…WLLF), 143–163 (YMVA…FGFM), 187–207 (IGLL…QTPI), 210–230 (IVTG…IIGI), and 263–283 (VEVD…LLVL).

It is found in the cell membrane. It functions in the pathway one-carbon metabolism; methylamine degradation. The protein is Methylamine utilization protein MauF (mauF) of Methylobacillus flagellatus (strain ATCC 51484 / DSM 6875 / VKM B-1610 / KT).